Consider the following 319-residue polypeptide: GTP 3',8-cyclase (319 aa).

In terms of domain architecture, Radical SAM core spans 4–219 (KHGRKINYLR…SKHSDLIPVE (216 aa)). GTP is bound at residue Arg-13. Cys-20 and Cys-24 together coordinate [4Fe-4S] cluster. Residue Tyr-26 participates in S-adenosyl-L-methionine binding. Cys-27 contacts [4Fe-4S] cluster. Residue Arg-63 participates in GTP binding. Gly-67 lines the S-adenosyl-L-methionine pocket. Thr-94 provides a ligand contact to GTP. Ser-118 is a binding site for S-adenosyl-L-methionine. Lys-155 serves as a coordination point for GTP. Position 189 (Met-189) interacts with S-adenosyl-L-methionine. Residues Cys-249 and Cys-252 each contribute to the [4Fe-4S] cluster site. Residue 254-256 (RVR) coordinates GTP. Cys-266 serves as a coordination point for [4Fe-4S] cluster.

This sequence belongs to the radical SAM superfamily. MoaA family. In terms of assembly, monomer and homodimer. [4Fe-4S] cluster serves as cofactor.

The catalysed reaction is GTP + AH2 + S-adenosyl-L-methionine = (8S)-3',8-cyclo-7,8-dihydroguanosine 5'-triphosphate + 5'-deoxyadenosine + L-methionine + A + H(+). The protein operates within cofactor biosynthesis; molybdopterin biosynthesis. Its function is as follows. Catalyzes the cyclization of GTP to (8S)-3',8-cyclo-7,8-dihydroguanosine 5'-triphosphate. The polypeptide is GTP 3',8-cyclase (Clostridium botulinum (strain Okra / Type B1)).